The following is a 321-amino-acid chain: tRNA-dihydrouridine synthase B (321 aa).

FMN contacts are provided by residues 16-18 (PMA) and glutamine 70. The Proton donor role is filled by cysteine 100. FMN contacts are provided by residues lysine 139, 200–202 (NGD), and 224–225 (GR).

It belongs to the Dus family. DusB subfamily. The cofactor is FMN.

The enzyme catalyses a 5,6-dihydrouridine in tRNA + NAD(+) = a uridine in tRNA + NADH + H(+). The catalysed reaction is a 5,6-dihydrouridine in tRNA + NADP(+) = a uridine in tRNA + NADPH + H(+). In terms of biological role, catalyzes the synthesis of 5,6-dihydrouridine (D), a modified base found in the D-loop of most tRNAs, via the reduction of the C5-C6 double bond in target uridines. This chain is tRNA-dihydrouridine synthase B, found in Salmonella typhi.